Here is a 156-residue protein sequence, read N- to C-terminus: Small ribosomal subunit protein uS7 (156 aa).

The protein belongs to the universal ribosomal protein uS7 family. In terms of assembly, part of the 30S ribosomal subunit. Contacts proteins S9 and S11.

In terms of biological role, one of the primary rRNA binding proteins, it binds directly to 16S rRNA where it nucleates assembly of the head domain of the 30S subunit. Is located at the subunit interface close to the decoding center, probably blocks exit of the E-site tRNA. The polypeptide is Small ribosomal subunit protein uS7 (Crocosphaera subtropica (strain ATCC 51142 / BH68) (Cyanothece sp. (strain ATCC 51142))).